The chain runs to 288 residues: 33 kDa chaperonin (288 aa).

Cystine bridges form between Cys233–Cys235 and Cys267–Cys270.

This sequence belongs to the HSP33 family. Post-translationally, under oxidizing conditions two disulfide bonds are formed involving the reactive cysteines. Under reducing conditions zinc is bound to the reactive cysteines and the protein is inactive.

The protein localises to the cytoplasm. Functionally, redox regulated molecular chaperone. Protects both thermally unfolding and oxidatively damaged proteins from irreversible aggregation. Plays an important role in the bacterial defense system toward oxidative stress. The protein is 33 kDa chaperonin of Pasteurella multocida (strain Pm70).